The sequence spans 387 residues: S-adenosylmethionine synthase (387 aa).

His-16 lines the ATP pocket. Asp-18 contributes to the Mg(2+) binding site. Glu-44 contacts K(+). 2 residues coordinate L-methionine: Glu-57 and Gln-100. A flexible loop region spans residues 100–110; it reads QSPDIAQGVDR. ATP is bound by residues 167–169, 232–233, Asp-241, 247–248, Ala-264, and Lys-268; these read DAK, RF, and RK. Asp-241 is an L-methionine binding site. Lys-272 provides a ligand contact to L-methionine.

Belongs to the AdoMet synthase family. In terms of assembly, homotetramer; dimer of dimers. Mg(2+) serves as cofactor. The cofactor is K(+).

Its subcellular location is the cytoplasm. The catalysed reaction is L-methionine + ATP + H2O = S-adenosyl-L-methionine + phosphate + diphosphate. It functions in the pathway amino-acid biosynthesis; S-adenosyl-L-methionine biosynthesis; S-adenosyl-L-methionine from L-methionine: step 1/1. Functionally, catalyzes the formation of S-adenosylmethionine (AdoMet) from methionine and ATP. The overall synthetic reaction is composed of two sequential steps, AdoMet formation and the subsequent tripolyphosphate hydrolysis which occurs prior to release of AdoMet from the enzyme. This Cupriavidus necator (strain ATCC 17699 / DSM 428 / KCTC 22496 / NCIMB 10442 / H16 / Stanier 337) (Ralstonia eutropha) protein is S-adenosylmethionine synthase.